A 243-amino-acid polypeptide reads, in one-letter code: CAVP-target protein (243 aa).

A disordered region spans residues 1–22 (PKPPAEAKPAAKPAAPPAAANP). Residues 7 to 20 (AKPAAKPAAPPAAA) show a composition bias toward low complexity. Residues 35-62 (SAATRIQASFRMHKNRMALKEKSIPKFS) enclose the IQ domain. 2 consecutive Ig-like C2-type domains span residues 59 to 150 (PKFS…LALE) and 151 to 243 (VPAK…VKVN).

In terms of biological role, this protein is the target of CAVP, which binds to it in a calcium-dependent manner. This Branchiostoma lanceolatum (Common lancelet) protein is CAVP-target protein.